A 270-amino-acid chain; its full sequence is Hydroxyethylthiazole kinase (270 aa).

Methionine 47 provides a ligand contact to substrate. Arginine 123 and serine 170 together coordinate ATP. Glycine 197 contributes to the substrate binding site.

The protein belongs to the Thz kinase family. It depends on Mg(2+) as a cofactor.

The enzyme catalyses 5-(2-hydroxyethyl)-4-methylthiazole + ATP = 4-methyl-5-(2-phosphooxyethyl)-thiazole + ADP + H(+). Its pathway is cofactor biosynthesis; thiamine diphosphate biosynthesis; 4-methyl-5-(2-phosphoethyl)-thiazole from 5-(2-hydroxyethyl)-4-methylthiazole: step 1/1. Functionally, catalyzes the phosphorylation of the hydroxyl group of 4-methyl-5-beta-hydroxyethylthiazole (THZ). This Syntrophus aciditrophicus (strain SB) protein is Hydroxyethylthiazole kinase.